Here is a 948-residue protein sequence, read N- to C-terminus: Valine--tRNA ligase (948 aa).

Residues 40-50 carry the 'HIGH' region motif; that stretch reads PNVTGSLHMGH. Residues 551–555 carry the 'KMSKS' region motif; the sequence is KMSKS. Lysine 554 is a binding site for ATP. Residues 879 to 945 are a coiled coil; that stretch reads LIDKGAELAR…GKLAEQHARI (67 aa).

This sequence belongs to the class-I aminoacyl-tRNA synthetase family. ValS type 1 subfamily. As to quaternary structure, monomer.

The protein resides in the cytoplasm. The enzyme catalyses tRNA(Val) + L-valine + ATP = L-valyl-tRNA(Val) + AMP + diphosphate. Catalyzes the attachment of valine to tRNA(Val). As ValRS can inadvertently accommodate and process structurally similar amino acids such as threonine, to avoid such errors, it has a 'posttransfer' editing activity that hydrolyzes mischarged Thr-tRNA(Val) in a tRNA-dependent manner. The protein is Valine--tRNA ligase of Pseudomonas syringae pv. syringae (strain B728a).